A 111-amino-acid polypeptide reads, in one-letter code: Probable 4-amino-4-deoxy-L-arabinose-phosphoundecaprenol flippase subunit ArnE (111 aa).

The Cytoplasmic portion of the chain corresponds to 1-37 (MIWLVLILASLLSVTGQLCQKQATRPVAINKRRKHIA). The helical transmembrane segment at 38–58 (LWLGLGLVCLGLAMVLWLLVL) threads the bilayer. In terms of domain architecture, EamA spans 40–109 (LGLGLVCLGL…IIGGIVILGS (70 aa)). Over 59–60 (QT) the chain is Periplasmic. Residues 61–81 (VPVGIAYPMLSLNFVWVTLAA) form a helical membrane-spanning segment. Residues 82–87 (TKLWHE) are Cytoplasmic-facing. A helical transmembrane segment spans residues 88-108 (PVSFRHWCGVAFIIGGIVILG). Topologically, residues 109 to 111 (STV) are periplasmic.

This sequence belongs to the ArnE family. In terms of assembly, heterodimer of ArnE and ArnF.

The protein localises to the cell inner membrane. It participates in bacterial outer membrane biogenesis; lipopolysaccharide biosynthesis. Its function is as follows. Translocates 4-amino-4-deoxy-L-arabinose-phosphoundecaprenol (alpha-L-Ara4N-phosphoundecaprenol) from the cytoplasmic to the periplasmic side of the inner membrane. The sequence is that of Probable 4-amino-4-deoxy-L-arabinose-phosphoundecaprenol flippase subunit ArnE from Escherichia fergusonii (strain ATCC 35469 / DSM 13698 / CCUG 18766 / IAM 14443 / JCM 21226 / LMG 7866 / NBRC 102419 / NCTC 12128 / CDC 0568-73).